A 547-amino-acid chain; its full sequence is Probable bifunctional tRNA threonylcarbamoyladenosine biosynthesis protein (547 aa).

The kae1 stretch occupies residues Met-1–Trp-329. His-113, His-117, and Tyr-134 together coordinate Fe cation. Residues Tyr-134 to Ala-138, Asp-166, Gly-179, Glu-183, and Asn-262 contribute to the L-threonylcarbamoyladenylate site. A Fe cation-binding site is contributed by Asp-290. The Protein kinase domain occupies Glu-340–Ala-547. ATP contacts are provided by residues Leu-355–Ile-363 and Lys-377. Residue Asp-464 is the Proton acceptor; for kinase activity of the active site.

It in the N-terminal section; belongs to the KAE1 / TsaD family. In the C-terminal section; belongs to the protein kinase superfamily. Tyr protein kinase family. BUD32 subfamily. Component of the KEOPS complex that consists of Kae1, Bud32, Cgi121 and Pcc1; the whole complex dimerizes. Requires Fe(2+) as cofactor.

It is found in the cytoplasm. It catalyses the reaction L-seryl-[protein] + ATP = O-phospho-L-seryl-[protein] + ADP + H(+). The enzyme catalyses L-threonyl-[protein] + ATP = O-phospho-L-threonyl-[protein] + ADP + H(+). The catalysed reaction is L-threonylcarbamoyladenylate + adenosine(37) in tRNA = N(6)-L-threonylcarbamoyladenosine(37) in tRNA + AMP + H(+). In terms of biological role, required for the formation of a threonylcarbamoyl group on adenosine at position 37 (t(6)A37) in tRNAs that read codons beginning with adenine. Is a component of the KEOPS complex that is probably involved in the transfer of the threonylcarbamoyl moiety of threonylcarbamoyl-AMP (TC-AMP) to the N6 group of A37. The Kae1 domain likely plays a direct catalytic role in this reaction. The Bud32 domain probably displays kinase activity that regulates Kae1 function. In Methanosarcina acetivorans (strain ATCC 35395 / DSM 2834 / JCM 12185 / C2A), this protein is Probable bifunctional tRNA threonylcarbamoyladenosine biosynthesis protein.